Reading from the N-terminus, the 31-residue chain is GTLPCGESCVWIPCISAAVGCSCKSKVCYKN.

The segment at residues 1-31 (GTLPCGESCVWIPCISAAVGCSCKSKVCYKN) is a cross-link (cyclopeptide (Gly-Asn)). 3 disulfides stabilise this stretch: cysteine 5–cysteine 21, cysteine 9–cysteine 23, and cysteine 14–cysteine 28.

Post-translationally, this is a cyclic peptide.

Its function is as follows. Probably participates in a plant defense mechanism. The sequence is that of Cycloviolacin-O6 from Viola odorata (Sweet violet).